The following is a 275-amino-acid chain: NH(3)-dependent NAD(+) synthetase (275 aa).

An ATP-binding site is contributed by 46 to 53 (GISGGQDS). Residue Asp-52 participates in Mg(2+) binding. A deamido-NAD(+)-binding site is contributed by Arg-140. Thr-160 is a binding site for ATP. Mg(2+) is bound at residue Glu-165. Residues Lys-173 and Asp-180 each contribute to the deamido-NAD(+) site. Lys-189 and Thr-211 together coordinate ATP. 260–261 (HK) is a deamido-NAD(+) binding site.

The protein belongs to the NAD synthetase family. Homodimer.

The catalysed reaction is deamido-NAD(+) + NH4(+) + ATP = AMP + diphosphate + NAD(+) + H(+). It participates in cofactor biosynthesis; NAD(+) biosynthesis; NAD(+) from deamido-NAD(+) (ammonia route): step 1/1. Its function is as follows. Catalyzes the ATP-dependent amidation of deamido-NAD to form NAD. Uses ammonia as a nitrogen source. The sequence is that of NH(3)-dependent NAD(+) synthetase from Erwinia tasmaniensis (strain DSM 17950 / CFBP 7177 / CIP 109463 / NCPPB 4357 / Et1/99).